A 190-amino-acid polypeptide reads, in one-letter code: NADH dehydrogenase [ubiquinone] iron-sulfur protein 3 (190 aa).

It belongs to the complex I 30 kDa subunit family. Complex I is composed of at least 49 different subunits. This is a component of the iron-sulfur (IP) fragment of the enzyme.

It localises to the mitochondrion inner membrane. It carries out the reaction a ubiquinone + NADH + 5 H(+)(in) = a ubiquinol + NAD(+) + 4 H(+)(out). Its function is as follows. Core subunit of the mitochondrial membrane respiratory chain NADH dehydrogenase (Complex I) that is believed to belong to the minimal assembly required for catalysis. Complex I functions in the transfer of electrons from NADH to the respiratory chain. The immediate electron acceptor for the enzyme is believed to be ubiquinone. In Arabidopsis thaliana (Mouse-ear cress), this protein is NADH dehydrogenase [ubiquinone] iron-sulfur protein 3 (NAD9).